The primary structure comprises 1006 residues: SAC3 family protein A (1006 aa).

7 disordered regions span residues 1-75 (MNHG…GPAT), 106-162 (TPYQ…PGSY), 183-239 (GYQS…TIAT), 266-326 (GTEK…AVST), 516-550 (TVTTTNVTNSESSSAQLSSLQNKSPTRRPKSRWEP), 595-638 (GFKP…SDKD), and 650-690 (AGSA…GNLH). Composition is skewed to polar residues over residues 26-75 (GSQT…GPAT) and 106-115 (TPYQTSSDPH). Over residues 116–140 (NYSNTGYSNYYSGYQQQPSQSYPQP) the composition is skewed to low complexity. Residues 144–162 (YQNTGAPQPLSSFQNPGSY) show a composition bias toward polar residues. Polar residues-rich tracts occupy residues 269-282 (KLSTPTTSAYSQSF) and 313-326 (SHPPSQQPGAAVST). A compositionally biased stretch (low complexity) spans 516 to 539 (TVTTTNVTNSESSSAQLSSLQNKS). Over residues 609-618 (SFQRPVKRQR) the composition is skewed to basic residues. A compositionally biased stretch (basic and acidic residues) spans 653-680 (AEEKKRRDSRSKRFEKIQGHSRGNDLTK). One can recognise a PCI domain in the interval 804–978 (DLPEYNQCLS…DMLLDTKATS (175 aa)).

The protein belongs to the SAC3 family. Interacts with EER5, SAC3B and CML20.

Its subcellular location is the nucleus. Its function is as follows. Component of the TREX-2 complex (transcription and export complex 2), a muliprotein complex that functions in docking export-competent ribonucleoprotein particles (mRNPs) to the nuclear entrance of the nuclear pore complex (nuclear basket). TREX-2 participates in mRNA export and accurate chromatin positioning in the nucleus by tethering genes to the nuclear periphery. The polypeptide is SAC3 family protein A (Arabidopsis thaliana (Mouse-ear cress)).